The primary structure comprises 416 residues: Nonsense-mediated decay protein 4 (416 aa).

3 disordered regions span residues 1-21 (MSLY…NYHD), 195-218 (QHPI…YNNS), and 356-393 (DRPS…ANGD). Over residues 12-21 (EARKNSNYHD) the composition is skewed to basic and acidic residues. A compositionally biased stretch (basic residues) spans 360–375 (KSKNKNKNKNTKKSTK).

The protein localises to the cytoplasm. Its function is as follows. Involved in nonsense-mediated decay of mRNAs containing premature stop codons. The sequence is that of Nonsense-mediated decay protein 4 (NMD4) from Debaryomyces hansenii (strain ATCC 36239 / CBS 767 / BCRC 21394 / JCM 1990 / NBRC 0083 / IGC 2968) (Yeast).